The primary structure comprises 229 residues: MSTWANLGLQDSASPLMEQLIFFHDHALLILVMITVLVGYLMFMLFFNSYVNRFLLHGQLIEMIWTILPAIILLFIAMPSLRLLYLLDEINEPSITLKSIGHQWYWSYEYSDFNNVEFDSYMIPTNELANDGFRLLDVDNRIVLPMNSQIRILVTAADVIHSWTVPALGVKVDGTPGRLNQTNFFINRPGLFYGQCSEICGANHSFMPIVIESVPVNYFIKWISNSVNS.

Topologically, residues 1–26 (MSTWANLGLQDSASPLMEQLIFFHDH) are mitochondrial intermembrane. Residues 27 to 48 (ALLILVMITVLVGYLMFMLFFN) form a helical membrane-spanning segment. Topologically, residues 49 to 62 (SYVNRFLLHGQLIE) are mitochondrial matrix. The chain crosses the membrane as a helical span at residues 63 to 82 (MIWTILPAIILLFIAMPSLR). Topologically, residues 83–229 (LLYLLDEINE…IKWISNSVNS (147 aa)) are mitochondrial intermembrane. The Cu cation site is built by His-161, Cys-196, Glu-198, Cys-200, His-204, and Met-207. Residue Glu-198 coordinates Mg(2+).

It belongs to the cytochrome c oxidase subunit 2 family. In terms of assembly, component of the cytochrome c oxidase (complex IV, CIV), a multisubunit enzyme composed of a catalytic core of 3 subunits and several supernumerary subunits. The complex exists as a monomer or a dimer and forms supercomplexes (SCs) in the inner mitochondrial membrane with ubiquinol-cytochrome c oxidoreductase (cytochrome b-c1 complex, complex III, CIII). It depends on Cu cation as a cofactor.

The protein localises to the mitochondrion inner membrane. The catalysed reaction is 4 Fe(II)-[cytochrome c] + O2 + 8 H(+)(in) = 4 Fe(III)-[cytochrome c] + 2 H2O + 4 H(+)(out). Functionally, component of the cytochrome c oxidase, the last enzyme in the mitochondrial electron transport chain which drives oxidative phosphorylation. The respiratory chain contains 3 multisubunit complexes succinate dehydrogenase (complex II, CII), ubiquinol-cytochrome c oxidoreductase (cytochrome b-c1 complex, complex III, CIII) and cytochrome c oxidase (complex IV, CIV), that cooperate to transfer electrons derived from NADH and succinate to molecular oxygen, creating an electrochemical gradient over the inner membrane that drives transmembrane transport and the ATP synthase. Cytochrome c oxidase is the component of the respiratory chain that catalyzes the reduction of oxygen to water. Electrons originating from reduced cytochrome c in the intermembrane space (IMS) are transferred via the dinuclear copper A center (CU(A)) of subunit 2 and heme A of subunit 1 to the active site in subunit 1, a binuclear center (BNC) formed by heme A3 and copper B (CU(B)). The BNC reduces molecular oxygen to 2 water molecules using 4 electrons from cytochrome c in the IMS and 4 protons from the mitochondrial matrix. The protein is Cytochrome c oxidase subunit 2 (mt:CoII) of Drosophila affinis (Fruit fly).